The primary structure comprises 139 residues: ATP synthase epsilon chain, chloroplastic (139 aa).

Belongs to the ATPase epsilon chain family. As to quaternary structure, F-type ATPases have 2 components, CF(1) - the catalytic core - and CF(0) - the membrane proton channel. CF(1) has five subunits: alpha(3), beta(3), gamma(1), delta(1), epsilon(1). CF(0) has three main subunits: a, b and c.

It localises to the plastid. The protein resides in the chloroplast thylakoid membrane. Its function is as follows. Produces ATP from ADP in the presence of a proton gradient across the membrane. The protein is ATP synthase epsilon chain, chloroplastic of Welwitschia mirabilis (Tree tumbo).